We begin with the raw amino-acid sequence, 826 residues long: Ubiquitin carboxyl-terminal hydrolase 16 (826 aa).

The interval 1 to 23 (MGKKRTKGKSVPEKASSESTEPM) is disordered. The UBP-type zinc-finger motif lies at 22 to 141 (PMCRHLRKGL…QVVDYVRKQA (120 aa)). 12 residues coordinate Zn(2+): Cys-24, His-26, Cys-48, Cys-51, Cys-73, Cys-76, Cys-81, His-89, His-93, His-102, Cys-115, and Cys-118. Lys-139 participates in a covalent cross-link: Glycyl lysine isopeptide (Lys-Gly) (interchain with G-Cter in SUMO2). The segment at 145-184 (TSKPAEKNNGHIELENKKLEKESKNEQEREKSESMAKENI) is disordered. The span at 148–180 (PAEKNNGHIELENKKLEKESKNEQEREKSESMA) shows a compositional bias: basic and acidic residues. Position 188 is a phosphoserine (Ser-188). Positions 195 to 825 (KGLSNLGNTC…QAYLLFYERI (631 aa)) constitute a USP domain. Cys-204 functions as the Nucleophile in the catalytic mechanism. Positions 392–407 (QSGKKNINDKNVKKTM) are enriched in basic and acidic residues. 2 disordered regions span residues 392–456 (QSGK…RRQQ) and 526–553 (ADER…TSAP). Acidic residues predominate over residues 408–419 (EEEDKDSEEEKD). Position 414 is a phosphoserine (Ser-414). Basic residues predominate over residues 436–456 (HTQKKAKKQAKKQAKNQRRQQ). A compositionally biased stretch (basic and acidic residues) spans 526–537 (ADERKCPEHPEV). A compositionally biased stretch (polar residues) spans 539-551 (SVSTESDLGSLTS). The Proton acceptor role is filled by His-760.

Belongs to the peptidase C19 family. USP16 subfamily. In terms of assembly, homotetramer. Associates with late pre-40S ribosomes. Interacts with CEP78; promoting deubiquitination of tektins. Post-translationally, phosphorylated at the onset of mitosis and dephosphorylated during the metaphase/anaphase transition. Phosphorylation by AURKB enhances the deubiquitinase activity.

The protein resides in the nucleus. The catalysed reaction is Thiol-dependent hydrolysis of ester, thioester, amide, peptide and isopeptide bonds formed by the C-terminal Gly of ubiquitin (a 76-residue protein attached to proteins as an intracellular targeting signal).. Specifically deubiquitinates 'Lys-120' of histone H2A (H2AK119Ub), a specific tag for epigenetic transcriptional repression, thereby acting as a coactivator. Deubiquitination of histone H2A is a prerequisite for subsequent phosphorylation at 'Ser-11' of histone H3 (H3S10ph), and is required for chromosome segregation when cells enter into mitosis. In resting B- and T-lymphocytes, phosphorylation by AURKB leads to enhance its activity, thereby maintaining transcription in resting lymphocytes. Regulates Hox gene expression via histone H2A deubiquitination. Prefers nucleosomal substrates. Does not deubiquitinate histone H2B. Also deubiquitinates non-histone proteins, such as ribosomal protein RPS27A: deubiquitination of monoubiquitinated RPS27A promotes maturation of the 40S ribosomal subunit. Also mediates deubiquitination of tektin proteins (TEKT1, TEKT2, TEK3, TEKT4 and TEKT5), promoting their stability. The polypeptide is Ubiquitin carboxyl-terminal hydrolase 16 (Usp16) (Rattus norvegicus (Rat)).